The primary structure comprises 274 residues: Dermonecrotic toxin SdSicTox-betaIIB1aii (274 aa).

The active site involves histidine 5. Positions 25 and 27 each coordinate Mg(2+). The active-site Nucleophile is the histidine 41. 2 disulfides stabilise this stretch: cysteine 45-cysteine 51 and cysteine 47-cysteine 190. Aspartate 85 lines the Mg(2+) pocket.

It belongs to the arthropod phospholipase D family. Class II subfamily. The cofactor is Mg(2+). As to expression, expressed by the venom gland.

The protein localises to the secreted. It carries out the reaction an N-(acyl)-sphingosylphosphocholine = an N-(acyl)-sphingosyl-1,3-cyclic phosphate + choline. The catalysed reaction is an N-(acyl)-sphingosylphosphoethanolamine = an N-(acyl)-sphingosyl-1,3-cyclic phosphate + ethanolamine. It catalyses the reaction a 1-acyl-sn-glycero-3-phosphocholine = a 1-acyl-sn-glycero-2,3-cyclic phosphate + choline. The enzyme catalyses a 1-acyl-sn-glycero-3-phosphoethanolamine = a 1-acyl-sn-glycero-2,3-cyclic phosphate + ethanolamine. Dermonecrotic toxins cleave the phosphodiester linkage between the phosphate and headgroup of certain phospholipids (sphingolipid and lysolipid substrates), forming an alcohol (often choline) and a cyclic phosphate. This toxin acts on sphingomyelin (SM). It may also act on ceramide phosphoethanolamine (CPE), lysophosphatidylcholine (LPC) and lysophosphatidylethanolamine (LPE), but not on lysophosphatidylserine (LPS), and lysophosphatidylglycerol (LPG). It acts by transphosphatidylation, releasing exclusively cyclic phosphate products as second products. Induces dermonecrosis, hemolysis, increased vascular permeability, edema, inflammatory response, and platelet aggregation. The polypeptide is Dermonecrotic toxin SdSicTox-betaIIB1aii (Sicarius cf. damarensis (strain GJB-2008) (Six-eyed sand spider)).